A 326-amino-acid chain; its full sequence is Probable sodium/potassium-transporting ATPase subunit beta-3 (326 aa).

The Cytoplasmic segment spans residues 1–59 (MMSSRTRKIYLFVFMFISTSLQLMNGEAKAEPETFRQFLYNKQKGTVLGRTGTSWCQIT). A helical; Signal-anchor for type II membrane protein transmembrane segment spans residues 60 to 80 (VFYIIFYIFLSAFFIGCLAIF). Residues 81 to 326 (LKTLDPKVPR…DKKPVAAPAA (246 aa)) lie on the Lumenal side of the membrane. Asn-144 and Asn-147 each carry an N-linked (GlcNAc...) asparagine glycan. Cys-234 and Cys-291 are joined by a disulfide.

Belongs to the X(+)/potassium ATPases subunit beta family. As to quaternary structure, the sodium/potassium-transporting ATPase is composed of a catalytic alpha subunit, an auxiliary non-catalytic beta subunit and an additional regulatory subunit.

The protein localises to the cell membrane. Functionally, this is the non-catalytic component of the active enzyme, which catalyzes the hydrolysis of ATP coupled with the exchange of Na(+) and K(+) ions across the plasma membrane. The beta subunit regulates, through assembly of alpha/beta heterodimers, the number of sodium pumps transported to the plasma membrane. Implicated in genomic response to various soil bacteria that affects fitness, lifespan and brood size. The protein is Probable sodium/potassium-transporting ATPase subunit beta-3 (nkb-3) of Caenorhabditis briggsae.